The chain runs to 146 residues: Hemoglobin subunit beta (146 aa).

Residues 2–146 (HWSAEEKQLI…VAHALARKYH (145 aa)) enclose the Globin domain. The heme b site is built by His63 and His92.

It belongs to the globin family. Heterotetramer of two alpha chains and two beta chains. As to expression, red blood cells.

Its function is as follows. Involved in oxygen transport from the lung to the various peripheral tissues. The sequence is that of Hemoglobin subunit beta (HBB) from Anseranas semipalmata (Magpie goose).